The chain runs to 358 residues: 3-ketosteroid-9-alpha-monooxygenase, ferredoxin reductase component (358 aa).

The FAD-binding FR-type domain occupies 12–124 (DHVLELQIAE…LAPSGNFVPT (113 aa)). A 2Fe-2S ferredoxin-type domain is found at 269 to 358 (ATAVVELDGQ…SDSVEVTYDE (90 aa)). Residues Cys-305, Cys-310, Cys-313, and Cys-343 each coordinate [2Fe-2S] cluster.

Monomer. The two-component system 3-ketosteroid-9-alpha-monooxygenase is composed of an oxygenase component KshA and a reductase component KshB. FAD is required as a cofactor. It depends on [2Fe-2S] cluster as a cofactor.

It catalyses the reaction androsta-1,4-diene-3,17-dione + 2 reduced [2Fe-2S]-[ferredoxin] + O2 + 2 H(+) = 9alpha-hydroxyandrosta-1,4-diene-3,17-dione + 2 oxidized [2Fe-2S]-[ferredoxin] + H2O. It participates in lipid metabolism; steroid biosynthesis. Its function is as follows. Involved in the degradation of cholesterol. Catalyzes the introduction of a 9a-hydroxyl moiety into 1,4-androstadiene-3,17-dione (ADD) to yield the 9alpha-hydroxy-1,4-androstadiene-3,17-dione (9OHADD) intermediate which spontaneously form 3-hydroxy-9,10-seconandrost-1,3,5(10)-triene-9,17-dione (HSA) via the meta-cleavage of ring B with concomitant aromatization of ring A. The protein is 3-ketosteroid-9-alpha-monooxygenase, ferredoxin reductase component (hmp) of Mycobacterium tuberculosis (strain CDC 1551 / Oshkosh).